Consider the following 560-residue polypeptide: uncharacterized protein (560 aa).

Residues 1-29 (MKSALKKSVVSTSISLILASGMAAFAAHA) form the signal peptide. Residues Asp66, Asp67, and Ser132 each contribute to the Ca(2+) site. Ser132 functions as the Nucleophile in the catalytic mechanism. Ser132 is modified (3-oxoalanine (Ser)). The active site involves His185. 2 residues coordinate Ca(2+): Asp345 and Asn346.

The protein belongs to the sulfatase family. Ca(2+) serves as cofactor. The conversion to 3-oxoalanine (also known as C-formylglycine, FGly), of a serine or cysteine residue in prokaryotes and of a cysteine residue in eukaryotes, is critical for catalytic activity.

This is an uncharacterized protein from Escherichia coli (strain K12).